The following is a 306-amino-acid chain: Protein STPG3 (306 aa).

The segment at 210–230 (CSYTPLLPTSKPSGEKRPSPN) is disordered.

The polypeptide is Protein STPG3 (Mus musculus (Mouse)).